Reading from the N-terminus, the 432-residue chain is 3-phosphoshikimate 1-carboxyvinyltransferase (432 aa).

3-phosphoshikimate contacts are provided by Lys-22, Ser-23, and Arg-27. Lys-22 lines the phosphoenolpyruvate pocket. Residues Gly-96 and Arg-127 each coordinate phosphoenolpyruvate. Ser-173, Ser-174, Gln-175, Ser-201, Asp-316, Asn-339, and Lys-343 together coordinate 3-phosphoshikimate. Gln-175 provides a ligand contact to phosphoenolpyruvate. Asp-316 serves as the catalytic Proton acceptor. 3 residues coordinate phosphoenolpyruvate: Arg-347, Arg-391, and Lys-416.

The protein belongs to the EPSP synthase family. Monomer.

It is found in the cytoplasm. The catalysed reaction is 3-phosphoshikimate + phosphoenolpyruvate = 5-O-(1-carboxyvinyl)-3-phosphoshikimate + phosphate. It participates in metabolic intermediate biosynthesis; chorismate biosynthesis; chorismate from D-erythrose 4-phosphate and phosphoenolpyruvate: step 6/7. Functionally, catalyzes the transfer of the enolpyruvyl moiety of phosphoenolpyruvate (PEP) to the 5-hydroxyl of shikimate-3-phosphate (S3P) to produce enolpyruvyl shikimate-3-phosphate and inorganic phosphate. This Haemophilus influenzae (strain PittGG) protein is 3-phosphoshikimate 1-carboxyvinyltransferase.